Here is a 3948-residue protein sequence, read N- to C-terminus: Equisetin synthetase eqxS (3948 aa).

The Ketosynthase family 3 (KS3) domain occupies 4-438 (SEPIAVIGSA…GTNAHAIIEA (435 aa)). Active-site for beta-ketoacyl synthase activity residues include Cys-177, His-316, and His-358. Positions 543 to 847 (IFTGQGTQWP…DTIEAISEGR (305 aa)) are malonyl-CoA:ACP transacylase (MAT) domain. An N-terminal hotdog fold region spans residues 931-1066 (HPLLGRRCHD…AQIKASLGAP (136 aa)). The segment at 931 to 1233 (HPLLGRRCHD…MELVPFSPAT (303 aa)) is dehydratase (DH) domain. The PKS/mFAS DH domain maps to 931 to 1235 (HPLLGRRCHD…LVPFSPATPA (305 aa)). The Proton acceptor; for dehydratase activity role is filled by His-964. Positions 1081 to 1235 (LRPVSVDRFY…LVPFSPATPA (155 aa)) are C-terminal hotdog fold. Asp-1141 acts as the Proton donor; for dehydratase activity in catalysis. Positions 1376–1574 (MLQDVYEQGF…GIDTTTPPVH (199 aa)) are methyltransferase (MT) domain. The tract at residues 2105 to 2277 (TFLLVGLTGE…VAASSIDISS (173 aa)) is ketoreductase (KR) domain. The Carrier 1 domain occupies 2389–2464 (AIIKESFIVR…DLVDECLDLL (76 aa)). Ser-2424 carries the post-translational modification O-(pantetheine 4'-phosphoryl)serine. The disordered stretch occupies residues 2480–2553 (QAAKPTTVIP…NSTDILAPPR (74 aa)). Composition is skewed to polar residues over residues 2487-2505 (VIPQ…QGTS) and 2513-2528 (GSDS…LTSW). Basic and acidic residues predominate over residues 2529–2541 (DRQDSSPPDKSDD). The segment at 2564 to 2991 (SYGQAGFWFL…IRGSDKTVDA (428 aa)) is condensation (C) domain. An adenylation (A) (KR) domain region spans residues 3026–3424 (QVIQDNPDNI…DGLLFCDGRL (399 aa)). Residues 3540-3617 (EILTPSEQRL…AMAGVLEDCG (78 aa)) enclose the Carrier 2 domain. Position 3577 is an O-(pantetheine 4'-phosphoryl)serine (Ser-3577). The tract at residues 3653 to 3870 (LTGSSGYLGR…MPVNEVVEAI (218 aa)) is reductase (RED) domain.

It in the C-terminal section; belongs to the NRP synthetase family.

The enzyme catalyses L-serine + 7 malonyl-CoA + acetyl-CoA + 2 S-adenosyl-L-methionine + ATP + 8 NADPH + 11 H(+) = (5S)-3-[(2E,6R,8E,10E,12E)-2,6-dimethyltetradeca-2,8,10,12-tetraenoyl]-5-(hydroxymethyl)pyrrolidine-2,4-dione + AMP + 2 S-adenosyl-L-homocysteine + 7 CO2 + diphosphate + 8 NADP(+) + 8 CoA + 6 H2O. It participates in mycotoxin biosynthesis. Its function is as follows. Hybrid PKS-NRPS synthetase; part of the gene cluster that mediates the biosynthesis of equisetin, a trans-fused decalin-containing tetramic acid with antimicrobial activity. The PKS module of eqxS together with the enoylreductase eqxC catalyze the formation of the polyketide unit which is then conjugated to L-serine by the condensation domain of the eqxS NRPS module. Activity of the Dieckmann cyclase domain (RED) results in release of the Dieckmann product intermediate. Diels-Alderase eqx3 is involved in endo-selective Diels-Alder cycloaddition to form the decalin ring, leading to the production of N-desmethylequisetin also called trichosetin. Subsequent N-methylation is carried out by eqxD to give equisetin. The sequence is that of Equisetin synthetase eqxS from Fusarium heterosporum.